The following is a 190-amino-acid chain: Somatotropin (190 aa).

The signal sequence occupies residues 1–17 (MNRVILLLSVMCVGVSS). 2 disulfide bridges follow: C69–C163 and C180–C188.

The protein belongs to the somatotropin/prolactin family.

Its subcellular location is the secreted. Growth hormone plays an important role in growth control and is involved in the regulation of several anabolic processes. Implicated as an osmoregulatory substance important for seawater adaptation. This Paralichthys olivaceus (Bastard halibut) protein is Somatotropin (gh).